Consider the following 1379-residue polypeptide: DNA-directed RNA polymerase subunit beta (1379 aa).

This sequence belongs to the RNA polymerase beta chain family. In terms of assembly, the RNAP catalytic core consists of 2 alpha, 1 beta, 1 beta' and 1 omega subunit. When a sigma factor is associated with the core the holoenzyme is formed, which can initiate transcription.

It catalyses the reaction RNA(n) + a ribonucleoside 5'-triphosphate = RNA(n+1) + diphosphate. Functionally, DNA-dependent RNA polymerase catalyzes the transcription of DNA into RNA using the four ribonucleoside triphosphates as substrates. This Chelativorans sp. (strain BNC1) protein is DNA-directed RNA polymerase subunit beta.